The primary structure comprises 512 residues: Bifunctional purine biosynthesis protein PurH (512 aa).

The MGS-like domain maps to 1–144; the sequence is MKRALVSVSD…KNYRDVVVVV (144 aa).

Belongs to the PurH family.

The enzyme catalyses (6R)-10-formyltetrahydrofolate + 5-amino-1-(5-phospho-beta-D-ribosyl)imidazole-4-carboxamide = 5-formamido-1-(5-phospho-D-ribosyl)imidazole-4-carboxamide + (6S)-5,6,7,8-tetrahydrofolate. The catalysed reaction is IMP + H2O = 5-formamido-1-(5-phospho-D-ribosyl)imidazole-4-carboxamide. Its pathway is purine metabolism; IMP biosynthesis via de novo pathway; 5-formamido-1-(5-phospho-D-ribosyl)imidazole-4-carboxamide from 5-amino-1-(5-phospho-D-ribosyl)imidazole-4-carboxamide (10-formyl THF route): step 1/1. The protein operates within purine metabolism; IMP biosynthesis via de novo pathway; IMP from 5-formamido-1-(5-phospho-D-ribosyl)imidazole-4-carboxamide: step 1/1. In Ligilactobacillus salivarius (strain UCC118) (Lactobacillus salivarius), this protein is Bifunctional purine biosynthesis protein PurH.